The primary structure comprises 365 residues: MNAKEFLIELLKFKSVTPNDDGALNFIAMELSDFEAFFIEKEGIKNLLLTKKFKDEGEHLAFGGHVDVVPAGEGWSNNAFAPVEKEGFIYARGAQDMKSGVAAFVDAAKNADFKGARLSLILTSDEEGEAIYGTKAVLEWMQERDMLPDYAVVAEPTCVKKIGDSIKIGRRGSINGKLLIRGKQGHVAYPEKCINPVHDFAPVLKLLAGFDLDPGSAEFSPSKIVITDIRGGMGVCNVTPNDLKLMFNVRNSPDTSLEDVKSYVEKICHGLNYELELKQSSEAFLTNIDNKIVQKMNESVQKITHEVPELNTKGGTSDARYFAKYGVKVVEFGVCNDRIHAIDERVSIEEFEKLCLVFKDLIENF.

His65 contributes to the Zn(2+) binding site. Asp67 is a catalytic residue. Asp96 contacts Zn(2+). Glu126 functions as the Proton acceptor in the catalytic mechanism. 3 residues coordinate Zn(2+): Glu127, Glu155, and His340.

This sequence belongs to the peptidase M20A family. DapE subfamily. In terms of assembly, homodimer. Zn(2+) serves as cofactor. The cofactor is Co(2+).

The enzyme catalyses N-succinyl-(2S,6S)-2,6-diaminopimelate + H2O = (2S,6S)-2,6-diaminopimelate + succinate. It functions in the pathway amino-acid biosynthesis; L-lysine biosynthesis via DAP pathway; LL-2,6-diaminopimelate from (S)-tetrahydrodipicolinate (succinylase route): step 3/3. Functionally, catalyzes the hydrolysis of N-succinyl-L,L-diaminopimelic acid (SDAP), forming succinate and LL-2,6-diaminopimelate (DAP), an intermediate involved in the bacterial biosynthesis of lysine and meso-diaminopimelic acid, an essential component of bacterial cell walls. This Campylobacter jejuni subsp. jejuni serotype O:2 (strain ATCC 700819 / NCTC 11168) protein is Succinyl-diaminopimelate desuccinylase.